The sequence spans 173 residues: Adenine phosphoribosyltransferase (173 aa).

Belongs to the purine/pyrimidine phosphoribosyltransferase family. In terms of assembly, homodimer.

Its subcellular location is the cytoplasm. The catalysed reaction is AMP + diphosphate = 5-phospho-alpha-D-ribose 1-diphosphate + adenine. Its pathway is purine metabolism; AMP biosynthesis via salvage pathway; AMP from adenine: step 1/1. Its function is as follows. Catalyzes a salvage reaction resulting in the formation of AMP, that is energically less costly than de novo synthesis. This Listeria monocytogenes serotype 4b (strain CLIP80459) protein is Adenine phosphoribosyltransferase.